The sequence spans 242 residues: MRFTLYPAIDLKDGQCVRLRRGEMEDATIYGNDPAVRARQWQDAGFAWLHVVDLNGAFAGRSENAEAITAILGAVSVPVQLGGGIRDMAAVERWIEAGISRVILGSAAVKTPQLVKDACRAFPGRIAVGIDARDGFVATEGWAETSSVAAVELAARFEDEGVAAIIYTDIGRDGMLTGPNVEQTLALARATTIPVIASGGVGDLSHIVDVYDAGTITGVILGRALYDGRVDPAAALQAVSLR.

The active-site Proton acceptor is Asp-10. Catalysis depends on Asp-131, which acts as the Proton donor.

The protein belongs to the HisA/HisF family.

Its subcellular location is the cytoplasm. The enzyme catalyses 1-(5-phospho-beta-D-ribosyl)-5-[(5-phospho-beta-D-ribosylamino)methylideneamino]imidazole-4-carboxamide = 5-[(5-phospho-1-deoxy-D-ribulos-1-ylimino)methylamino]-1-(5-phospho-beta-D-ribosyl)imidazole-4-carboxamide. Its pathway is amino-acid biosynthesis; L-histidine biosynthesis; L-histidine from 5-phospho-alpha-D-ribose 1-diphosphate: step 4/9. This is 1-(5-phosphoribosyl)-5-[(5-phosphoribosylamino)methylideneamino] imidazole-4-carboxamide isomerase from Granulibacter bethesdensis (strain ATCC BAA-1260 / CGDNIH1).